The chain runs to 536 residues: Putative beta-xylosidase (536 aa).

The Proton acceptor role is filled by D14. E186 acts as the Proton donor in catalysis.

This sequence belongs to the glycosyl hydrolase 43 family.

It carries out the reaction Hydrolysis of (1-&gt;4)-beta-D-xylans, to remove successive D-xylose residues from the non-reducing termini.. This is Putative beta-xylosidase (yagH) from Escherichia coli (strain K12).